We begin with the raw amino-acid sequence, 344 residues long: Heat-inducible transcription repressor HrcA (344 aa).

It belongs to the HrcA family.

Negative regulator of class I heat shock genes (grpE-dnaK-dnaJ and groELS operons). Prevents heat-shock induction of these operons. The chain is Heat-inducible transcription repressor HrcA from Desulforudis audaxviator (strain MP104C).